A 260-amino-acid chain; its full sequence is Lipid II isoglutaminyl synthase (glutamine-hydrolyzing) subunit GatD (260 aa).

A GATase cobBQ-type domain is found at 16-214 (QLNIAHLYGN…FHGPILSRNA (199 aa)). C107 serves as the catalytic Nucleophile. Position 142 (R142) interacts with substrate. H206 is a catalytic residue.

The protein belongs to the CobB/CobQ family. GatD subfamily. In terms of assembly, forms a heterodimer with MurT.

It catalyses the reaction beta-D-GlcNAc-(1-&gt;4)-Mur2Ac(oyl-L-Ala-gamma-D-Glu-L-Lys-D-Ala-D-Ala)-di-trans,octa-cis-undecaprenyl diphosphate + L-glutamine + ATP + H2O = beta-D-GlcNAc-(1-&gt;4)-Mur2Ac(oyl-L-Ala-D-isoglutaminyl-L-Lys-D-Ala-D-Ala)-di-trans,octa-cis-undecaprenyl diphosphate + L-glutamate + ADP + phosphate + H(+). The enzyme catalyses L-glutamine + H2O = L-glutamate + NH4(+). It participates in cell wall biogenesis; peptidoglycan biosynthesis. In terms of biological role, the lipid II isoglutaminyl synthase complex catalyzes the formation of alpha-D-isoglutamine in the cell wall lipid II stem peptide. The GatD subunit catalyzes the hydrolysis of glutamine to glutamate and ammonia. The resulting ammonia molecule is channeled to the active site of MurT. The sequence is that of Lipid II isoglutaminyl synthase (glutamine-hydrolyzing) subunit GatD from Streptococcus pneumoniae (strain ATCC BAA-255 / R6).